The primary structure comprises 1333 residues: Protein CLASP-1 (1333 aa).

An HEAT 1 repeat occupies 168-206 (LIPQLCRLTNDPNSEVRDASTNCLVDLMVFGGKSIIAKI). Residues 269–305 (STTSFTSSARLSTPPRTNAPSLSPSPSTPSPLSLPAA) show a composition bias toward low complexity. The tract at residues 269–311 (STTSFTSSARLSTPPRTNAPSLSPSPSTPSPLSLPAANGRSRD) is disordered. Positions 360–389 (SNSDVREKLETANSVLRNANEDWSKRANQL) form a coiled coil. Disordered stretches follow at residues 579 to 711 (QKML…HQTP) and 764 to 792 (TPPK…NSSN). The span at 601-611 (NQKQPQQPQQN) shows a compositional bias: low complexity. Residues 612 to 644 (ISQKFLSQRSASALDNKSQVLSIAKPQQSNPSR) show a composition bias toward polar residues. Low complexity-rich tracts occupy residues 657–669 (SSTS…VRSS) and 686–707 (TNFN…STST). Residues 1266 to 1304 (VAPCFVSAYDSTSSSVRKCAVFGLVALVQRVGMPRLETH) form an HEAT 2 repeat.

This sequence belongs to the CLASP family.

Its subcellular location is the cytoplasm. The protein resides in the cytoskeleton. In terms of biological role, microtubule plus-end tracking protein that promotes the stabilization of dynamic microtubules. The protein is Protein CLASP-1 of Caenorhabditis briggsae.